Here is a 489-residue protein sequence, read N- to C-terminus: Probable cytosol aminopeptidase (489 aa).

Positions 254 and 259 each coordinate Mn(2+). The active site involves K266. Mn(2+) is bound by residues D277, D336, and E338. R340 is an active-site residue.

The protein belongs to the peptidase M17 family. Mn(2+) serves as cofactor.

Its subcellular location is the cytoplasm. The catalysed reaction is Release of an N-terminal amino acid, Xaa-|-Yaa-, in which Xaa is preferably Leu, but may be other amino acids including Pro although not Arg or Lys, and Yaa may be Pro. Amino acid amides and methyl esters are also readily hydrolyzed, but rates on arylamides are exceedingly low.. It catalyses the reaction Release of an N-terminal amino acid, preferentially leucine, but not glutamic or aspartic acids.. Its function is as follows. Presumably involved in the processing and regular turnover of intracellular proteins. Catalyzes the removal of unsubstituted N-terminal amino acids from various peptides. In Cereibacter sphaeroides (strain ATCC 17025 / ATH 2.4.3) (Rhodobacter sphaeroides), this protein is Probable cytosol aminopeptidase.